A 41-amino-acid polypeptide reads, in one-letter code: Large ribosomal subunit protein bL36 (41 aa).

Belongs to the bacterial ribosomal protein bL36 family.

The protein is Large ribosomal subunit protein bL36 of Sinorhizobium medicae (strain WSM419) (Ensifer medicae).